We begin with the raw amino-acid sequence, 57 residues long: Large ribosomal subunit protein bL32 (57 aa).

Over residues 1 to 19 (MAVPKRRMSRANTRSRRAQ) the composition is skewed to basic residues. The interval 1 to 20 (MAVPKRRMSRANTRSRRAQW) is disordered.

Belongs to the bacterial ribosomal protein bL32 family.

This is Large ribosomal subunit protein bL32 from Mycolicibacterium smegmatis (strain ATCC 700084 / mc(2)155) (Mycobacterium smegmatis).